Here is a 596-residue protein sequence, read N- to C-terminus: Dihydroxy-acid dehydratase pbrD, mitochondrial (596 aa).

The transit peptide at 1 to 18 (MATSSIRSRALGLSRRAR) directs the protein to the mitochondrion. Cys-84 contacts [2Fe-2S] cluster. Asp-116 contacts Mg(2+). Cys-157 provides a ligand contact to [2Fe-2S] cluster. Residue Asp-158 participates in Mg(2+) binding. Cys-230 provides a ligand contact to [2Fe-2S] cluster. Glu-483 lines the Mg(2+) pocket. Ser-509 (proton acceptor) is an active-site residue.

It belongs to the IlvD/Edd family. Requires [2Fe-2S] cluster as cofactor. Mg(2+) serves as cofactor.

The protein resides in the mitochondrion. It catalyses the reaction (2R)-2,3-dihydroxy-3-methylbutanoate = 3-methyl-2-oxobutanoate + H2O. The enzyme catalyses (2R,3R)-2,3-dihydroxy-3-methylpentanoate = (S)-3-methyl-2-oxopentanoate + H2O. Its pathway is amino-acid biosynthesis; L-isoleucine biosynthesis; L-isoleucine from 2-oxobutanoate: step 3/4. The protein operates within amino-acid biosynthesis; L-valine biosynthesis; L-valine from pyruvate: step 3/4. Its activity is regulated as follows. DHAD activity is not inhibited by the dihydroxyacid dehydratase inhibitor aspterric acid (AA). Dihydroxyacid dehydratase; part of the gene cluster that mediates the biosynthesis of the sesquiterpenoid aspterric acid (AA), an inhibitor of dihydroxy-acid dehydratase (DHAD) effective as an herbicide. Performs the third step in the common pathway leading to biosynthesis of branched-chain amino acids. Catalyzes the dehydration of (2R,3R)-2,3-dihydroxy-3-methylpentanoate (2,3-dihydroxy-3-methylvalerate) into 2-oxo-3-methylpentanoate (2-oxo-3-methylvalerate) and of (2R)-2,3-dihydroxy-3-methylbutanoate (2,3-dihydroxyisovalerate) into 2-oxo-3-methylbutanoate (2-oxoisovalerate), the penultimate precursor to L-isoleucine and L-valine, respectively. PbrD confers self-resistance in the presence of the dihydroxyacid dehydratase inhibitor aspterric acid (AA) produced by the ast cluster. The sequence is that of Dihydroxy-acid dehydratase pbrD, mitochondrial from Penicillium brasilianum.